The sequence spans 337 residues: MRPILLSGHERSLNQIKFNRDGDLIFSVAKDKIVCAWWSANGERLGTYNGHQGAIWTVDVSPNTQILATGSADNTVRLWNVKTGECIKVWDFPTAVKRVRVHPPMEADCWPVTEKRMGFLGTIAVLDINYGENLTEQAEEPSLRITCTESKATVAGWSYMGKYIIAGHEDGSVSQYDGKTGEQLENVQAHEFDHQINDIQFSADRTYFITASKDKSAKLMSTRNLAILKTYVADTPLNSATITPKKDYVILGGGQAAMDVTTTSARQGKFEARFYHKVFEDEIGRVRGHFGPLNTVHIHPAGTAYASGGEDGYVRVHHFDKPYFDFMYEVEREQLRK.

WD repeat units follow at residues 8–47 (GHER…RLGT), 50–91 (GHQG…KVWD), 147–186 (CTES…QLEN), 191–230 (EFDH…ILKT), and 288–327 (GHFG…FDFM).

The protein belongs to the eIF-3 subunit I family. Component of the eukaryotic translation initiation factor 3 (eIF-3) complex.

The protein localises to the cytoplasm. Its function is as follows. Component of the eukaryotic translation initiation factor 3 (eIF-3) complex, which is involved in protein synthesis of a specialized repertoire of mRNAs and, together with other initiation factors, stimulates binding of mRNA and methionyl-tRNAi to the 40S ribosome. The eIF-3 complex specifically targets and initiates translation of a subset of mRNAs involved in cell proliferation. The chain is Eukaryotic translation initiation factor 3 subunit I (tif34) from Aspergillus niger (strain ATCC MYA-4892 / CBS 513.88 / FGSC A1513).